The chain runs to 131 residues: uncharacterized protein (131 aa).

Residues M1–Y67 are disordered. The residue at position 14 (S14) is a Phosphoserine. The chain crosses the membrane as a helical span at residues V99–V119.

It belongs to the FAM241 family.

Its subcellular location is the membrane. This is an uncharacterized protein from Mus musculus (Mouse).